Consider the following 242-residue polypeptide: UPF0246 protein SP_1547 (242 aa).

The protein belongs to the UPF0246 family.

The polypeptide is UPF0246 protein SP_1547 (Streptococcus pneumoniae serotype 4 (strain ATCC BAA-334 / TIGR4)).